A 353-amino-acid polypeptide reads, in one-letter code: Dimethylsulfoniopropionate lyase 2 (353 aa).

Catalysis depends on proton donor/acceptor residues C125 and C274. A disordered region spans residues 326 to 353 (DPNETDVSKGRPTKAEHRFGPEFEEMLQ). Over residues 331–346 (DVSKGRPTKAEHRFGP) the composition is skewed to basic and acidic residues.

This sequence belongs to the aspartate/glutamate racemases family. ALMA1 subfamily. In terms of assembly, homotetramer.

The catalysed reaction is S,S-dimethyl-beta-propiothetin = acrylate + dimethyl sulfide + H(+). In terms of biological role, mediates cleavage of dimethylsulfoniopropionate (DMSP) into dimethyl sulfide (DMS) and acrylate. DMS is the principal form by which sulfur is transported from oceans to the atmosphere and is a key component of the ocean sulfur cycle. This is Dimethylsulfoniopropionate lyase 2 from Emiliania huxleyi (strain CCMP1516).